The primary structure comprises 758 residues: Dachshund homolog 1 (758 aa).

Disordered regions lie at residues 1 to 105 (MAVP…SNCN) and 134 to 185 (INAS…TPQN). The span at 20-53 (ISTSASSSGTTTSTSSATSSPAPSIGPPASSGPT) shows a compositional bias: low complexity. The segment covering 73 to 102 (TGGGGGGGGSGGGGGSSGNGGGGGGGGGGS) has biased composition (gly residues). The segment covering 140–163 (SSSSSSSSSSSSSSSSSSSSSSSS) has biased composition (low complexity). The span at 174-185 (STPSPVENTPQN) shows a compositional bias: polar residues. Positions 189–275 (KMVDLRGAKV…LISRKDFETL (87 aa)) are DACHbox-N. The tract at residues 189–384 (KMVDLRGAKV…VGSSDGSWDK (196 aa)) is interaction with SIX6 and HDAC3. Disordered regions lie at residues 280–302 (TNAS…PENS), 358–414 (SNNQ…PLSH), 474–532 (SPPS…RIPV), and 544–564 (MGLS…GHDM). Polar residues-rich tracts occupy residues 292 to 301 (RTQSVTSPEN), 358 to 380 (SNNQ…SSDG), and 387 to 399 (LPSS…QASI). S491 carries the phosphoserine modification. Positions 506–524 (SHPSSHRSSSVSSSPARTE) are enriched in low complexity. Residues 555–564 (KEGDLAGHDM) show a composition bias toward basic and acidic residues. The DACHbox-C stretch occupies residues 616 to 696 (SSIETLLTNI…KAKRKLQEAL (81 aa)). The interval 627–706 (GLLKVAIDNA…EFETKRREQA (80 aa)) is interaction with SIN3A. Residues 630-718 (KVAIDNARAQ…TLKQAASTDS (89 aa)) adopt a coiled-coil conformation.

It belongs to the DACH/dachshund family. In terms of assembly, interacts with SIX1, SIX6 and EYA3. Interacts with NCOR1 and HDAC3 through its N-terminus. Interacts with SIN3A through its C-terminus. Interacts with SMAD3 and SMAD4. In terms of tissue distribution, widely expressed. Isoform 2 is found in brain, heart, kidney, liver, leukocytes and spleen. Isoform 3 is found in liver and heart. Isoform 4 is found in spleen.

The protein localises to the nucleus. Functionally, transcription factor that is involved in regulation of organogenesis. Seems to be a regulator of SIX1, SIX6 and probably SIX5. Corepression of precursor cell proliferation in myoblasts by SIX1 is switched to coactivation through recruitment of EYA3 to the SIX1-DACH1 complex. Transcriptional activation also seems to involve association of CREBBP. Seems to act as a corepressor of SIX6 in regulating proliferation by directly repressing cyclin-dependent kinase inhibitors, including the p27Kip1 promoter. Inhibits TGF-beta signaling through interaction with SMAD4 and NCOR1. Binds to chromatin DNA via its DACHbox-N domain. The chain is Dachshund homolog 1 (DACH1) from Homo sapiens (Human).